The primary structure comprises 71 residues: KTVAGFCIFFLVLFLAQEGVVKTEAKLCNHLADTYRGPCFTNASCDDHCKNKEHFVSGTCMKMACWCAHNC.

The first 25 residues, 1–25, serve as a signal peptide directing secretion; that stretch reads KTVAGFCIFFLVLFLAQEGVVKTEA. 3 cysteine pairs are disulfide-bonded: Cys28–Cys71, Cys39–Cys60, and Cys45–Cys65.

Belongs to the DEFL family. As to quaternary structure, may form dimers. In terms of processing, not glycosylated. Post-translationally, contains 4 disulfide bonds. Met-61 and Met-63 might be oxidized in some molecules.

Probably has antifungal activity. This is Defensin 1 from Arachis hypogaea (Peanut).